Reading from the N-terminus, the 51-residue chain is Large ribosomal subunit protein eL39 (51 aa).

This sequence belongs to the eukaryotic ribosomal protein eL39 family.

The protein is Large ribosomal subunit protein eL39 of Methanosarcina acetivorans (strain ATCC 35395 / DSM 2834 / JCM 12185 / C2A).